Consider the following 432-residue polypeptide: Adenylosuccinate synthetase (432 aa).

Residues 13-19 (GDEGKGK) and 41-43 (GHT) contribute to the GTP site. Asp-14 functions as the Proton acceptor in the catalytic mechanism. Positions 14 and 41 each coordinate Mg(2+). IMP is bound by residues 14–17 (DEGK), 39–42 (NAGH), Thr-130, Arg-144, Gln-225, Thr-240, and Arg-304. His-42 acts as the Proton donor in catalysis. A substrate-binding site is contributed by 300-306 (AVTGRPR). GTP-binding positions include Arg-306, 332–334 (KLD), and 415–417 (STG).

Belongs to the adenylosuccinate synthetase family. In terms of assembly, homodimer. Mg(2+) is required as a cofactor.

The protein localises to the cytoplasm. The catalysed reaction is IMP + L-aspartate + GTP = N(6)-(1,2-dicarboxyethyl)-AMP + GDP + phosphate + 2 H(+). It participates in purine metabolism; AMP biosynthesis via de novo pathway; AMP from IMP: step 1/2. Plays an important role in the de novo pathway of purine nucleotide biosynthesis. Catalyzes the first committed step in the biosynthesis of AMP from IMP. This is Adenylosuccinate synthetase from Haemophilus influenzae (strain 86-028NP).